The following is a 534-amino-acid chain: Beta-1,2-xylosyltransferase (534 aa).

At 1-11 (MSKRNPKILKI) the chain is on the cytoplasmic side. A helical; Signal-anchor for type II membrane protein transmembrane segment spans residues 12–34 (FLYMLLLNSLFLIIYFVFHSSSF). The Lumenal portion of the chain corresponds to 35–534 (SPEQSQPPHI…LTEIMKSLGC (500 aa)). N-linked (GlcNAc...) asparagine glycosylation is found at N51, N301, and N479.

In terms of processing, glycosylation at least at one of the two sites Asn-51 and Asn-301 is necessary for enzyme stability and activity.

The protein resides in the golgi apparatus membrane. It catalyses the reaction N(4)-{beta-D-GlcNAc-(1-&gt;2)-alpha-D-Man-(1-&gt;3)-[beta-D-GlcNAc-(1-&gt;2)-alpha-D-Man-(1-&gt;6)]-beta-D-Man-(1-&gt;4)-beta-D-GlcNAc-(1-&gt;4)-beta-D-GlcNAc}-L-asparaginyl-[protein] + UDP-alpha-D-xylose = N(4)-{beta-D-GlcNAc-(1-&gt;2)-alpha-D-Man-(1-&gt;3)-[beta-D-GlcNAc-(1-&gt;2)-alpha-D-Man-(1-&gt;6)]-[beta-D-Xyl-(1-&gt;2)]-beta-D-Man-(1-&gt;4)-beta-D-GlcNAc-(1-&gt;4)-beta-D-GlcNAc}-L-asparaginyl-[protein] + UDP + H(+). It functions in the pathway protein modification; protein glycosylation. In terms of biological role, glycosyltransferase involved in the xylosylation of N-glycans. Possesses beta-1,2-xylosyltransferase activity, transferring xylose from UDP-xylose to the core beta-linked mannose of N-glycans. Involved in the biosynthesis of glycoprotein bound N-glycans. Does not require metal ions for its activity. This chain is Beta-1,2-xylosyltransferase, found in Arabidopsis thaliana (Mouse-ear cress).